A 218-amino-acid polypeptide reads, in one-letter code: Capsid protein (218 aa).

Met-1 is modified (N-acetylmethionine; by host). Over residues 1–10 the composition is skewed to low complexity; sequence MDKSESTSAG. Residues 1–30 are disordered; the sequence is MDKSESTSAGRNRRRRPRRGSRSASSSADA. Positions 11–21 are enriched in basic residues; that stretch reads RNRRRRPRRGS.

The protein belongs to the cucumovirus capsid protein family.

The protein resides in the virion. In terms of biological role, capsid protein. Probably binds RNA and plays a role in packaging. This chain is Capsid protein, found in Cucumber mosaic virus (strain P6) (CMV).